Reading from the N-terminus, the 339-residue chain is Biotin synthase (339 aa).

One can recognise a Radical SAM core domain in the interval 53-271; it reads NAIQMSRLLS…IALARILMPR (219 aa). [4Fe-4S] cluster contacts are provided by C68, C72, and C75. Positions 112, 143, 203, and 275 each coordinate [2Fe-2S] cluster.

The protein belongs to the radical SAM superfamily. Biotin synthase family. As to quaternary structure, homodimer. It depends on [4Fe-4S] cluster as a cofactor. [2Fe-2S] cluster serves as cofactor.

It carries out the reaction (4R,5S)-dethiobiotin + (sulfur carrier)-SH + 2 reduced [2Fe-2S]-[ferredoxin] + 2 S-adenosyl-L-methionine = (sulfur carrier)-H + biotin + 2 5'-deoxyadenosine + 2 L-methionine + 2 oxidized [2Fe-2S]-[ferredoxin]. It participates in cofactor biosynthesis; biotin biosynthesis; biotin from 7,8-diaminononanoate: step 2/2. In terms of biological role, catalyzes the conversion of dethiobiotin (DTB) to biotin by the insertion of a sulfur atom into dethiobiotin via a radical-based mechanism. In Agrobacterium fabrum (strain C58 / ATCC 33970) (Agrobacterium tumefaciens (strain C58)), this protein is Biotin synthase.